The chain runs to 357 residues: D-alanine--D-alanine ligase (357 aa).

The 206-residue stretch at 134 to 339 (KQLFEHRGLP…YPDLIAKLID (206 aa)) folds into the ATP-grasp domain. Residue 167–222 (NDKLTYPVFVKPANLGSSVGISKCNNEEELKSGITEAFQFDRKLVIEQGINAREIE) coordinates ATP. Residues D293, E306, and N308 each coordinate Mg(2+).

This sequence belongs to the D-alanine--D-alanine ligase family. It depends on Mg(2+) as a cofactor. Mn(2+) serves as cofactor.

Its subcellular location is the cytoplasm. It carries out the reaction 2 D-alanine + ATP = D-alanyl-D-alanine + ADP + phosphate + H(+). The protein operates within cell wall biogenesis; peptidoglycan biosynthesis. Functionally, cell wall formation. This chain is D-alanine--D-alanine ligase, found in Staphylococcus epidermidis (strain ATCC 12228 / FDA PCI 1200).